A 641-amino-acid polypeptide reads, in one-letter code: Vacuolar protein sorting-associated protein 52 (641 aa).

The stretch at 81 to 110 forms a coiled coil; sequence LTEFTNRLSNYTQDLDFIKKKSNELQSLLE. A Phosphoserine modification is found at Ser602.

This sequence belongs to the VPS52 family. Component of the Golgi-associated retrograde protein (GARP) complex, also called VFT (VPS fifty-three) complex, composed of VPS51, VPS52, VPS53 and VPS54. Also interacts with TLG1 and YPT6.

The protein localises to the golgi apparatus. Its subcellular location is the trans-Golgi network membrane. The protein resides in the endosome membrane. It is found in the cytoplasm. It localises to the cytoskeleton. Involved in retrograde transport from early and late endosomes to late Golgi by linking the vesicle through the t-SNARE TGL1 to the Golgi, leading to the membrane fusion between late Golgi and endosomal vesicles. May also be involved in the actin cytoskeleton organization. The protein is Vacuolar protein sorting-associated protein 52 (VPS52) of Saccharomyces cerevisiae (strain ATCC 204508 / S288c) (Baker's yeast).